Consider the following 482-residue polypeptide: 7-deoxyloganetic acid glucosyltransferase (482 aa).

Catalysis depends on H22, which acts as the Proton acceptor. H22 contacts an anthocyanidin. Catalysis depends on D127, which acts as the Charge relay. Positions 149, 362, 364, 379, 382, 383, 384, and 387 each coordinate UDP-alpha-D-glucose. A402 serves as a coordination point for an anthocyanidin. Positions 403 and 404 each coordinate UDP-alpha-D-glucose.

It belongs to the UDP-glycosyltransferase family. In terms of tissue distribution, expressed in leaves, roots and stems. Lower levels of expression in flowers. Preferentially expressed in internal phloem parenchyma cells.

It carries out the reaction 7-deoxyloganetate + UDP-alpha-D-glucose = 7-deoxyloganate + UDP + H(+). Iridoid glucosyltransferase acting exclusively on 7-deoxyloganetic acid. No activity with 7-deoxyloganetin. Catalyzes the fourth to last step in secologanin biosynthesis. The protein is 7-deoxyloganetic acid glucosyltransferase (UGT709C2) of Catharanthus roseus (Madagascar periwinkle).